A 399-amino-acid chain; its full sequence is O-glucosyltransferase rumi homolog (399 aa).

The N-terminal stretch at 1 to 18 (MHFIIGIVICLSLSVIQS) is a signal peptide. Residues asparagine 19 and asparagine 67 are each glycosylated (N-linked (GlcNAc...) asparagine). 4 cysteine pairs are disulfide-bonded: cysteine 66–cysteine 73, cysteine 71–cysteine 373, cysteine 118–cysteine 124, and cysteine 277–cysteine 300. Aspartate 149 (proton donor/acceptor) is an active-site residue. An interaction with the consensus sequence C-X-S-X-[PA]-C in peptide substrates region spans residues 189 to 194 (AIALYP). UDP-alpha-D-glucose contacts are provided by residues 224-228 (RGSRT), arginine 232, 271-273 (VTL), and 289-293 (AASFR).

This sequence belongs to the glycosyltransferase 90 family.

The protein localises to the endoplasmic reticulum lumen. It localises to the secreted. It participates in protein modification; protein glycosylation. Protein O-glucosyltransferase. Catalyzes the reaction that attaches glucose through an O-glycosidic linkage to a conserved serine residue found in the consensus sequence C-X-S-X-[PA]-C in epidermal growth factor-like repeats. Regulates Notch signaling by glucosylating Notch in the ER, glucosylation is required for the correct folding and cleavage of Notch. This Anopheles gambiae (African malaria mosquito) protein is O-glucosyltransferase rumi homolog.